The following is a 359-amino-acid chain: DNA integrity scanning protein DisA (359 aa).

The 140-residue stretch at 7–146 (DDIFRATLAA…GRRYVLDGSA (140 aa)) folds into the DAC domain. Residues glycine 74, leucine 92, and 105-109 (TRHRT) each bind ATP.

The protein belongs to the DisA family. In terms of assembly, homooctamer. Mg(2+) is required as a cofactor.

It carries out the reaction 2 ATP = 3',3'-c-di-AMP + 2 diphosphate. In terms of biological role, participates in a DNA-damage check-point that is active prior to asymmetric division when DNA is damaged. DisA forms globular foci that rapidly scan along the chromosomes during sporulation, searching for lesions. When a lesion is present, DisA pauses at the lesion site. This triggers a cellular response that culminates in a temporary block in sporulation initiation. Its function is as follows. Also has diadenylate cyclase activity, catalyzing the condensation of 2 ATP molecules into cyclic di-AMP (c-di-AMP). c-di-AMP acts as a signaling molecule that couples DNA integrity with progression of sporulation. The rise in c-di-AMP level generated by DisA while scanning the chromosome, operates as a positive signal that advances sporulation; upon encountering a lesion, the DisA focus arrests at the damaged site and halts c-di-AMP synthesis. This chain is DNA integrity scanning protein DisA, found in Frankia casuarinae (strain DSM 45818 / CECT 9043 / HFP020203 / CcI3).